Consider the following 435-residue polypeptide: GTPase Obg (435 aa).

Positions methionine 1 to leucine 158 constitute an Obg domain. Residues alanine 159–arginine 328 form the OBG-type G domain. Residues glycine 165 to serine 172, phenylalanine 190 to threonine 194, aspartate 211 to glycine 214, asparagine 280 to aspartate 283, and serine 309 to lysine 311 contribute to the GTP site. Mg(2+) contacts are provided by serine 172 and threonine 192. The OCT domain occupies isoleucine 343–alanine 426.

It belongs to the TRAFAC class OBG-HflX-like GTPase superfamily. OBG GTPase family. Monomer. The cofactor is Mg(2+).

It localises to the cytoplasm. Functionally, an essential GTPase which binds GTP, GDP and possibly (p)ppGpp with moderate affinity, with high nucleotide exchange rates and a fairly low GTP hydrolysis rate. Plays a role in control of the cell cycle, stress response, ribosome biogenesis and in those bacteria that undergo differentiation, in morphogenesis control. The polypeptide is GTPase Obg (Dictyoglomus thermophilum (strain ATCC 35947 / DSM 3960 / H-6-12)).